A 1168-amino-acid chain; its full sequence is MAYTSKHGVDDMVMLTSISNDAINDNLKKRFAADLIYTYIGHVLISVNPYKQINNLYTERTLKDYRGKYRYELPPHVYALADDMYRTMLSESEDQCVIISGESGAGKTEASKKIMQYIAAVSGATGDVMRVKDVILEAFGNAKTIRNNNSSRFGKYMEIQFDLKGDPVGGRISNYLLEKSRVVYQTNGERNFHIFYQLLAARARRPEAKFGLQTPDYYFYLNQGKTYTVDGMDDNQEFQDTWNAMKVIGFTAEEQHEIFRLVTAILYLGNVQFVDDGKGGSTIADSRPVAVETALLYRTITTGEQGRGRSSVYSCPQDPLGAIYSRDALSKALYSRMFDYIIQRVNDAMYIDDPEALTTGILDIYGFEIFGKNGFEQLCINFVNEKLQQIFIQLTLKAEQEEYGAEGIQWENIDYFNNKICCDLIEEKRPPGLMTILDDVCNFPKGTDDKFREKLLGAFPTHAHLAATSQPDEFVIKHYAGDVVYNVDGFCDKNKDLLFKDLIGLAECTSSTFFAGLFPEAKEVATSKKKPTTAGFKIKESINILVATLSKCTPHYIRCIKPNEKKAANAFNNSLVLHQVKYLGLLENVRIRRAGYAYRQSYDKFFYRYRVVCPKTWSGWNGDMVSGAEAILNHVGMSLGKEYQKGKTKIFIRQPESVFSLEELRDRTVFSYANKIQRFLRKTAMRKYYYEVKKGGNDALVNKKERRRLSLERPFKTDYINYRQNFKLKDCIGDKGTEKVLFADLCNNLDKSFWGSKVERRIMVLTSNAMFLVAIDPNKDKIEKKVKPFLYVLKRRIDFNKIGSITLSPLQDNFMLISVNGEHSNLLECRRKTELIGVLLKHNPSVRIQFADTFNVTLKGGKTCVVKFIRDPQGGDGKVKGTKVSVAPGLPPSSAPNIQAPQETSGGASFTVAEQSYKDQILGAKGGGGGGGRGRGGPSPSGAVSPRPSPGGGGGGPSPFGGRPSPSGPPAAASAPGPEQARALYDFAAENPDELTFNEGAVVTVINKSNPDWWEGELNGQRGVFPASYVELIPRAAAPAPGPSGGPRPAPPGGKSGRAAPMGGPGPMRGRGGPAPGGPGRGGAPPPGAGRAGPPGGRGMPAPGGAAPRGRGAPPPGAGGPPGGGRGGAPPPGGMRGRGGPGPAPPGGMARGGMMPPRGRAGPPPPGM.

One can recognise a Myosin motor domain in the interval histidine 7–aspartate 666. ATP is bound at residue glycine 101–threonine 108. Phosphoserine is present on serine 311. An actin-binding region spans residues isoleucine 542 to glutamate 564. Positions lysine 704–proline 892 constitute a TH1 domain. 3 disordered regions span residues aspartate 876–serine 909, isoleucine 921–proline 978, and alanine 1036–methionine 1168. Residues alanine 895 to serine 909 show a composition bias toward polar residues. 2 stretches are compositionally biased toward gly residues: residues alanine 924–serine 939 and proline 950–proline 959. Over residues phenylalanine 960 to proline 978 the composition is skewed to low complexity. In terms of domain architecture, SH3 spans proline 976 to arginine 1035. Positions alanine 1040–proline 1052 are enriched in pro residues. Gly residues-rich tracts occupy residues glycine 1063–glycine 1083 and glycine 1090–glycine 1099. A compositionally biased stretch (low complexity) spans methionine 1100–glycine 1112. The segment covering glycine 1120–proline 1141 has biased composition (gly residues). Over residues glycine 1152 to alanine 1161 the composition is skewed to low complexity.

The protein belongs to the TRAFAC class myosin-kinesin ATPase superfamily. Myosin family. In terms of assembly, myosin I heavy chain is single-headed. Dimer of a heavy and a light chain. Inability to self-assemble into filaments.

Functionally, myosin is a protein that binds to F-actin and has ATPase activity that is activated by F-actin. This chain is Myosin IC heavy chain (MIC), found in Acanthamoeba castellanii (Amoeba).